The primary structure comprises 224 residues: Proteasome subunit beta (224 aa).

Residues 1–6 (MDVMKG) constitute a propeptide, removed in mature form; by autocatalysis. Residue threonine 7 is the Nucleophile of the active site.

The protein belongs to the peptidase T1B family. The 20S proteasome core is composed of 14 alpha and 14 beta subunits that assemble into four stacked heptameric rings, resulting in a barrel-shaped structure. The two inner rings, each composed of seven catalytic beta subunits, are sandwiched by two outer rings, each composed of seven alpha subunits. The catalytic chamber with the active sites is on the inside of the barrel. Has a gated structure, the ends of the cylinder being occluded by the N-termini of the alpha-subunits. Is capped at one or both ends by the proteasome regulatory ATPase, PAN.

The protein localises to the cytoplasm. The enzyme catalyses Cleavage of peptide bonds with very broad specificity.. Its activity is regulated as follows. The formation of the proteasomal ATPase PAN-20S proteasome complex, via the docking of the C-termini of PAN into the intersubunit pockets in the alpha-rings, triggers opening of the gate for substrate entry. Interconversion between the open-gate and close-gate conformations leads to a dynamic regulation of the 20S proteasome proteolysis activity. Its function is as follows. Component of the proteasome core, a large protease complex with broad specificity involved in protein degradation. The protein is Proteasome subunit beta of Methanocaldococcus fervens (strain DSM 4213 / JCM 15782 / AG86) (Methanococcus fervens).